A 444-amino-acid polypeptide reads, in one-letter code: Nuclear distribution protein nudF (444 aa).

A LisH domain is found at 9-41 (QAEALHKAMLAYLSVINAPQTAETLREELHFDE). The stretch at 60–88 (TGIARLQRRINDLEAEVRSLQAELEASPS) forms a coiled coil. The segment at 83–107 (LEASPSAARAKNQDPTNWLPKPSST) is disordered. WD repeat units follow at residues 112-153 (SHRD…RTLK), 155-195 (HIRG…ANIR), 199-239 (GHDH…CVKV), 243-282 (ATES…PKAA), 285-345 (GHEN…IKTL), 347-386 (GHDN…RLVK), and 391-437 (AHEH…GCAD).

The protein belongs to the WD repeat LIS1/nudF family. In terms of assembly, interacts with dynein. Self-associates. Interacts with bnfA, nudC and nudE.

It localises to the cytoplasm. Its subcellular location is the cytoskeleton. It is found in the spindle pole. Its function is as follows. Positively regulates the activity of the minus-end directed microtubule motor protein dynein. May enhance dynein-mediated microtubule sliding by targeting dynein to the microtubule plus end. Required for nuclear migration during vegetative growth as well as development. Required for retrograde early endosome (EE) transport from the hyphal tip. Required for localization of dynein to the mitotic spindle poles. Recruits additional proteins to the dynein complex at SPBs. The sequence is that of Nuclear distribution protein nudF from Emericella nidulans (strain FGSC A4 / ATCC 38163 / CBS 112.46 / NRRL 194 / M139) (Aspergillus nidulans).